The sequence spans 34 residues: Photosystem II reaction center protein M (34 aa).

The chain crosses the membrane as a helical span at residues 5–25 (ILAFIATALFVLIPTAFLIIL).

Belongs to the PsbM family. In terms of assembly, PSII is composed of 1 copy each of membrane proteins PsbA, PsbB, PsbC, PsbD, PsbE, PsbF, PsbH, PsbI, PsbJ, PsbK, PsbL, PsbM, PsbT, PsbX, PsbY, PsbZ, Psb30/Ycf12, at least 3 peripheral proteins of the oxygen-evolving complex and a large number of cofactors. It forms dimeric complexes.

The protein localises to the plastid. It is found in the chloroplast thylakoid membrane. In terms of biological role, one of the components of the core complex of photosystem II (PSII). PSII is a light-driven water:plastoquinone oxidoreductase that uses light energy to abstract electrons from H(2)O, generating O(2) and a proton gradient subsequently used for ATP formation. It consists of a core antenna complex that captures photons, and an electron transfer chain that converts photonic excitation into a charge separation. This subunit is found at the monomer-monomer interface. This Zygnema circumcarinatum (Green alga) protein is Photosystem II reaction center protein M.